Here is a 401-residue protein sequence, read N- to C-terminus: Short chain dehydrogenase/reductase dpchH (401 aa).

N16 carries N-linked (GlcNAc...) asparagine glycosylation. The helical transmembrane segment at 51-71 (VRAVDVLFGTFLYVPLGILFL) threads the bilayer. NAD(+) contacts are provided by residues 72-80 (KKSLSGFGD), 99-100 (TG), and 118-120 (AKV). Residue N242 is glycosylated (N-linked (GlcNAc...) asparagine). The Proton acceptor role is filled by Y275. Residues 275-279 (YGTSK) and 308-310 (GTI) each bind NAD(+). An N-linked (GlcNAc...) asparagine glycan is attached at N386.

The protein localises to the membrane. The protein operates within secondary metabolite biosynthesis; terpenoid biosynthesis. Functionally, short chain dehydrogenase/reductase; part of the gene cluster that mediates the biosynthesis of the diterpenoid pyrones higginsianins A and B. The first step of the pathway is the synthesis of the alpha-pyrone moiety by the polyketide synthase dpchA via condensation of one acetyl-CoA starter unit with 3 malonyl-CoA units and 2 methylations. The alpha-pyrone is then combined with geranylgeranyl pyrophosphate (GGPP) formed by the GGPP synthase dpchD through the action of the prenyltransferase dpchC to yield a linear alpha-pyrone diterpenoid. Subsequent steps in the diterpenoid pyrone biosynthetic pathway involve the decalin core formation, which is initiated by the epoxidation of the C10-C11 olefin by the FAD-dependent oxidoreductase dpchE, and is followed by a cyclization cascade catalyzed by the terpene cyclase dpchB. The short chain dehydrogenase/reductase dpchG then oxidizes the 8S hydroxy group to a ketone and the short chain dehydrogenase/reductase dpchH reduces the ketone to the 8R hydroxy group to yield higginsianin B. Finally, the FAD-dependent oxidoreductase dpchF converts higginsianin B into higginsianin A. The sequence is that of Short chain dehydrogenase/reductase dpchH from Colletotrichum higginsianum (strain IMI 349063) (Crucifer anthracnose fungus).